A 200-amino-acid chain; its full sequence is MQLKRVAEAKLPTPWGDFLMVGFEELATGQDHVALVYGDISGQSPVLARVHSECLTGDALFSLRCDCGFQLEAALSHIAEEGRGILLYHRQEGRNIGLLNKIRAYALQDQGYDTVEANHQLGFAADERDFTLCADMFKLLNVEQVRLLTNNPKKVEILTEAGINIVERVPLIVGRNPKNAHYLDTKAAKMGHLLNSKPAE.

49-53 (RVHSE) serves as a coordination point for GTP. The Zn(2+) site is built by Cys-54, Cys-65, and Cys-67. GTP is bound by residues Gln-70, 92–94 (EGR), and Thr-114. Catalysis depends on Asp-126, which acts as the Proton acceptor. The active-site Nucleophile is the Arg-128. Residues Thr-149 and Lys-154 each contribute to the GTP site.

The protein belongs to the GTP cyclohydrolase II family. In terms of assembly, homodimer. Requires Zn(2+) as cofactor.

It catalyses the reaction GTP + 4 H2O = 2,5-diamino-6-hydroxy-4-(5-phosphoribosylamino)-pyrimidine + formate + 2 phosphate + 3 H(+). Its pathway is cofactor biosynthesis; riboflavin biosynthesis; 5-amino-6-(D-ribitylamino)uracil from GTP: step 1/4. In terms of biological role, catalyzes the conversion of GTP to 2,5-diamino-6-ribosylamino-4(3H)-pyrimidinone 5'-phosphate (DARP), formate and pyrophosphate. This chain is GTP cyclohydrolase-2, found in Klebsiella pneumoniae (strain 342).